Consider the following 136-residue polypeptide: Large ribosomal subunit protein bL17 (136 aa).

Belongs to the bacterial ribosomal protein bL17 family. Part of the 50S ribosomal subunit. Contacts protein L32.

This chain is Large ribosomal subunit protein bL17, found in Rickettsia prowazekii (strain Madrid E).